Here is a 169-residue protein sequence, read N- to C-terminus: Shikimate kinase (169 aa).

ATP is bound at residue 12–17 (AVGKTT). Mg(2+) is bound at residue T16. Residues D34, R58, and G80 each contribute to the substrate site. R119 serves as a coordination point for ATP. R139 contributes to the substrate binding site. R156 lines the ATP pocket.

The protein belongs to the shikimate kinase family. As to quaternary structure, monomer. Requires Mg(2+) as cofactor.

Its subcellular location is the cytoplasm. It carries out the reaction shikimate + ATP = 3-phosphoshikimate + ADP + H(+). Its pathway is metabolic intermediate biosynthesis; chorismate biosynthesis; chorismate from D-erythrose 4-phosphate and phosphoenolpyruvate: step 5/7. Functionally, catalyzes the specific phosphorylation of the 3-hydroxyl group of shikimic acid using ATP as a cosubstrate. The polypeptide is Shikimate kinase (Alkaliphilus oremlandii (strain OhILAs) (Clostridium oremlandii (strain OhILAs))).